A 166-amino-acid polypeptide reads, in one-letter code: Ribosome maturation factor RimP (166 aa).

It belongs to the RimP family.

It localises to the cytoplasm. Functionally, required for maturation of 30S ribosomal subunits. This is Ribosome maturation factor RimP from Psychrobacter sp. (strain PRwf-1).